The primary structure comprises 434 residues: Eukaryotic translation initiation factor 3 subunit E-2 (434 aa).

The region spanning 219–392 (FFNHPKGRDL…GHVVMGTQPL (174 aa)) is the PCI domain.

Belongs to the eIF-3 subunit E family. In terms of assembly, component of the eukaryotic translation initiation factor 3 (eIF-3) complex. The eIF-3 complex interacts with pix. Interacts with mxt.

The protein localises to the cytoplasm. Its function is as follows. Component of the eukaryotic translation initiation factor 3 (eIF-3) complex, which is involved in protein synthesis of a specialized repertoire of mRNAs and, together with other initiation factors, stimulates binding of mRNA and methionyl-tRNAi to the 40S ribosome. The eIF-3 complex specifically targets and initiates translation of a subset of mRNAs involved in cell proliferation. The protein is Eukaryotic translation initiation factor 3 subunit E-2 (eIF3-S6-2) of Drosophila willistoni (Fruit fly).